Here is a 284-residue protein sequence, read N- to C-terminus: MAVRDGGGSAPVGSQEQAVDRVRETVARSRRYGAVAPETVRRLAERALVASRGDEPEAVKRTKRSLHEIYGAYLPERAPGYPGLLRDIGAAVGGGDPDAVAAAVSRAMRVHASTRERLPYLREFYAAVFGAVPTPAVVQDLACGLNPLAFGSMGLPAQTTYLASDIDSQQMEFLDRALDLLEVEHRVEVVDLVSGAVPAQHADVTLVLKTLPLLERQRAGAGWELVDALRSPFVVVSFPTRSLGQRSKGMFQTYSAAFEAQAAERGWTFDQAEIANELIYIVRR.

Residues Tyr-73, 111–113 (HAS), Arg-117, Ala-142, Asp-165, 191–192 (DL), Leu-208, and Gln-217 each bind S-adenosyl-L-methionine.

This sequence belongs to the methyltransferase superfamily. Aminoglycoside resistance family.

It carries out the reaction guanosine(1405) in 16S rRNA + S-adenosyl-L-methionine = N(7)-methylguanosine(1405) in 16S rRNA + S-adenosyl-L-homocysteine. Specifically methylates the N(7) position of guanine 1405 in 16S rRNA. Confers resistance to various aminoglycosides, including gentamicin and kanamycin. The protein is 16S rRNA (guanine(1405)-N(7))-methyltransferase (Krm) of Frankia casuarinae (strain DSM 45818 / CECT 9043 / HFP020203 / CcI3).